The following is a 167-amino-acid chain: Transcription initiation factor TFIID subunit 10 (167 aa).

2 disordered regions span residues 1 to 56 (MASD…EESE) and 119 to 139 (TTNI…NPKD). The segment covering 41–56 (EQPDVEEVPLTTEESE) has biased composition (acidic residues). The segment covering 130-139 (SSKDKKNPKD) has biased composition (basic and acidic residues).

The protein belongs to the TAF10 family. As to quaternary structure, belongs to the TFIID complex which is composed of TATA binding protein (Tbp) and a number of TBP-associated factors (TAFs). Also a member of the histone acetylase (HAT) complex. At embryonic stage 9, highest expression is detected within the ectoderm, ventral chord, and anterior foregut primordium. Later in development preferential expression is in the foregut, proventriculus, and central nervous system. Coexpressed with Taf10b in the lateral epidermis and anal plate.

It is found in the cytoplasm. The protein resides in the nucleus. Functionally, TFIID is a multimeric protein complex that plays a central role in mediating promoter responses to various activators and repressors. The protein is Transcription initiation factor TFIID subunit 10 of Drosophila melanogaster (Fruit fly).